Reading from the N-terminus, the 137-residue chain is Aspartate 1-decarboxylase (137 aa).

Residue Ser-25 is the Schiff-base intermediate with substrate; via pyruvic acid of the active site. At Ser-25 the chain carries Pyruvic acid (Ser). Thr-57 lines the substrate pocket. The Proton donor role is filled by Tyr-58. Position 73-75 (73-75 (GAA)) interacts with substrate.

This sequence belongs to the PanD family. In terms of assembly, heterooctamer of four alpha and four beta subunits. Requires pyruvate as cofactor. Is synthesized initially as an inactive proenzyme, which is activated by self-cleavage at a specific serine bond to produce a beta-subunit with a hydroxyl group at its C-terminus and an alpha-subunit with a pyruvoyl group at its N-terminus.

The protein resides in the cytoplasm. It carries out the reaction L-aspartate + H(+) = beta-alanine + CO2. The protein operates within cofactor biosynthesis; (R)-pantothenate biosynthesis; beta-alanine from L-aspartate: step 1/1. Its function is as follows. Catalyzes the pyruvoyl-dependent decarboxylation of aspartate to produce beta-alanine. In Thermobifida fusca (strain YX), this protein is Aspartate 1-decarboxylase.